Here is a 61-residue protein sequence, read N- to C-terminus: Small ribosomal subunit protein uS14 (61 aa).

4 residues coordinate Zn(2+): Cys-24, Cys-27, Cys-40, and Cys-43.

The protein belongs to the universal ribosomal protein uS14 family. Zinc-binding uS14 subfamily. In terms of assembly, part of the 30S ribosomal subunit. Contacts proteins S3 and S10. The cofactor is Zn(2+).

Functionally, binds 16S rRNA, required for the assembly of 30S particles and may also be responsible for determining the conformation of the 16S rRNA at the A site. The sequence is that of Small ribosomal subunit protein uS14 from Frankia casuarinae (strain DSM 45818 / CECT 9043 / HFP020203 / CcI3).